The primary structure comprises 511 residues: GMP synthase [glutamine-hydrolyzing] (511 aa).

The Glutamine amidotransferase type-1 domain occupies 3 to 198; sequence SVLVLDFGSQ…LLNIAAITPD (196 aa). Cysteine 80 serves as the catalytic Nucleophile. Active-site residues include histidine 172 and glutamate 174. The GMPS ATP-PPase domain occupies 199–386; it reads WSSKSFIEHQ…LGIPEDILMR (188 aa). Residue 226–232 coordinates ATP; the sequence is SGGVDST.

As to quaternary structure, homodimer.

The catalysed reaction is XMP + L-glutamine + ATP + H2O = GMP + L-glutamate + AMP + diphosphate + 2 H(+). It functions in the pathway purine metabolism; GMP biosynthesis; GMP from XMP (L-Gln route): step 1/1. Its function is as follows. Catalyzes the synthesis of GMP from XMP. The sequence is that of GMP synthase [glutamine-hydrolyzing] from Chlorobium chlorochromatii (strain CaD3).